A 121-amino-acid chain; its full sequence is Small ribosomal subunit protein uS13 (121 aa).

The segment at 91-121 (HRKGLPMRGQRTRTNARTRKGPRKAGVALKK) is disordered.

It belongs to the universal ribosomal protein uS13 family. In terms of assembly, part of the 30S ribosomal subunit. Forms a loose heterodimer with protein S19. Forms two bridges to the 50S subunit in the 70S ribosome.

In terms of biological role, located at the top of the head of the 30S subunit, it contacts several helices of the 16S rRNA. In the 70S ribosome it contacts the 23S rRNA (bridge B1a) and protein L5 of the 50S subunit (bridge B1b), connecting the 2 subunits; these bridges are implicated in subunit movement. Contacts the tRNAs in the A and P-sites. The chain is Small ribosomal subunit protein uS13 from Cupriavidus taiwanensis (strain DSM 17343 / BCRC 17206 / CCUG 44338 / CIP 107171 / LMG 19424 / R1) (Ralstonia taiwanensis (strain LMG 19424)).